The primary structure comprises 310 residues: tRNA-cytidine(32) 2-sulfurtransferase (310 aa).

The PP-loop motif signature appears at 47-52 (SGGKDS). Residues C122, C125, and C213 each coordinate [4Fe-4S] cluster.

This sequence belongs to the TtcA family. As to quaternary structure, homodimer. Mg(2+) serves as cofactor. It depends on [4Fe-4S] cluster as a cofactor.

It is found in the cytoplasm. It catalyses the reaction cytidine(32) in tRNA + S-sulfanyl-L-cysteinyl-[cysteine desulfurase] + AH2 + ATP = 2-thiocytidine(32) in tRNA + L-cysteinyl-[cysteine desulfurase] + A + AMP + diphosphate + H(+). The protein operates within tRNA modification. Functionally, catalyzes the ATP-dependent 2-thiolation of cytidine in position 32 of tRNA, to form 2-thiocytidine (s(2)C32). The sulfur atoms are provided by the cysteine/cysteine desulfurase (IscS) system. The sequence is that of tRNA-cytidine(32) 2-sulfurtransferase from Cronobacter sakazakii (strain ATCC BAA-894) (Enterobacter sakazakii).